We begin with the raw amino-acid sequence, 220 residues long: UPF0643 protein PB2B2.08 (220 aa).

This sequence belongs to the UPF0643 family.

It localises to the cytoplasm. The protein localises to the nucleus. The sequence is that of UPF0643 protein PB2B2.08 from Schizosaccharomyces pombe (strain 972 / ATCC 24843) (Fission yeast).